The primary structure comprises 519 residues: MTTFWSQTINRQNGGVATATATATATAATTTPTAGGTGAGTTTSTKGMITPTPFNIDINNDLNDFDGKFIETFKPDLELQKKYRSFIQREGALSFLRTEITQSMSKRDICVLILNLGYPKKAVEDYPILTLKELAYILLKLMLTDSAQLEPKVEIDENDNKNDGTNNSDIDSDIDSNSDMDSQSESGELDDAMDVDDSLSENEDEYDQDMSTTTLKRTINMTPFKYKLPDLISDLSRAKKIMVVTGAGISTSLGIPDFRSFKGLYNQLSKLNLSDPQKVFDLQTFMREPGLFYTIAHLVLPPDGKFSLLHAFLKLLQDKHKLLRNYTQNIDNLEQRAGLKSEKLVQCHGSFAKAKCVSCQGIFAGEKIYNHIRRKQVPRCAICWKNTKQAPIHFGAIKPTITFFGEDLPERFHTLMDKDLQQIDLFLVIGTSLKVEPVASIIERVPYKVPKILINKDPIPNRGFNLQLLGLCDDVVSYLCKCLKWDIPHADFNNNDEFKLSKLKNGDWEIVKKSTSTKK.

The interval 154–212 (EIDENDNKNDGTNNSDIDSDIDSNSDMDSQSESGELDDAMDVDDSLSENEDEYDQDMST) is disordered. Positions 187–208 (GELDDAMDVDDSLSENEDEYDQ) are enriched in acidic residues. In terms of domain architecture, Deacetylase sirtuin-type spans 221–486 (MTPFKYKLPD…SYLCKCLKWD (266 aa)). Residues 246–265 (GAGI…KGLY) and 328–331 (QNID) contribute to the NAD(+) site. The active-site Proton acceptor is His-348. Residues Cys-356, Cys-359, Cys-380, and Cys-383 each contribute to the Zn(2+) site. NAD(+)-binding positions include 430-432 (GTS), 455-457 (NKD), and Cys-472.

Belongs to the sirtuin family. Class I subfamily. Interacts with HXK1. The cofactor is Zn(2+).

It is found in the nucleus. The catalysed reaction is N(6)-acetyl-L-lysyl-[protein] + NAD(+) + H2O = 2''-O-acetyl-ADP-D-ribose + nicotinamide + L-lysyl-[protein]. Functionally, NAD-dependent deacetylase. Heterochromatin component that silences transcription at silent mating loci, telomeres and the ribosomal DNA, and that also suppresses recombination in the rDNA and extends replicative life span. It acts as a NAD-dependent histone deacetylase, which deacetylates 'Lys-9' and 'Lys-14' of Histone H3 and 'Lys-16' of Histone H4. Functions in the distribution of oxidatively damaged proteins during cell division. Mediates phenotypic switching. The polypeptide is NAD-dependent histone deacetylase SIR2 (Candida albicans (strain SC5314 / ATCC MYA-2876) (Yeast)).